A 190-amino-acid chain; its full sequence is Potassium-transporting ATPase KdpC subunit (190 aa).

The helical transmembrane segment at 10–30 threads the bilayer; that stretch reads VLFAVLTLICGVIYPYAITGI.

Belongs to the KdpC family. The system is composed of three essential subunits: KdpA, KdpB and KdpC.

It localises to the cell inner membrane. Part of the high-affinity ATP-driven potassium transport (or Kdp) system, which catalyzes the hydrolysis of ATP coupled with the electrogenic transport of potassium into the cytoplasm. This subunit acts as a catalytic chaperone that increases the ATP-binding affinity of the ATP-hydrolyzing subunit KdpB by the formation of a transient KdpB/KdpC/ATP ternary complex. The protein is Potassium-transporting ATPase KdpC subunit of Herminiimonas arsenicoxydans.